The sequence spans 234 residues: AA9 family lytic polysaccharide monooxygenase D (234 aa).

The N-terminal stretch at 1 to 18 (MRIEKLLNAALLAGAVSA) is a signal peptide. Cu(2+) is bound by residues His-19 and His-95. An intrachain disulfide couples Cys-57 to Cys-182. The O2 site is built by His-168 and Gln-177. Tyr-179 provides a ligand contact to Cu(2+).

Belongs to the polysaccharide monooxygenase AA9 family. Cu(2+) serves as cofactor.

It localises to the secreted. The catalysed reaction is [(1-&gt;4)-beta-D-glucosyl]n+m + reduced acceptor + O2 = 4-dehydro-beta-D-glucosyl-[(1-&gt;4)-beta-D-glucosyl]n-1 + [(1-&gt;4)-beta-D-glucosyl]m + acceptor + H2O.. Lytic polysaccharide monooxygenase (LPMO) that depolymerizes crystalline and amorphous polysaccharides via the oxidation of scissile alpha- or beta-(1-4)-glycosidic bonds, yielding C1 or C4 oxidation products. Catalysis by LPMOs requires the reduction of the active-site copper from Cu(II) to Cu(I) by a reducing agent and H(2)O(2) or O(2) as a cosubstrate. The protein is AA9 family lytic polysaccharide monooxygenase D of Malbranchea cinnamomea (Thermophilic fungus).